The following is a 137-amino-acid chain: Urease subunit beta (137 aa).

The disordered stretch occupies residues 113-137; sequence NGHPNAGVKNDEGKQNANKESGDNR.

It belongs to the urease beta subunit family. In terms of assembly, heterotrimer of UreA (gamma), UreB (beta) and UreC (alpha) subunits. Three heterotrimers associate to form the active enzyme.

The protein localises to the cytoplasm. It carries out the reaction urea + 2 H2O + H(+) = hydrogencarbonate + 2 NH4(+). It functions in the pathway nitrogen metabolism; urea degradation; CO(2) and NH(3) from urea (urease route): step 1/1. In Staphylococcus carnosus (strain TM300), this protein is Urease subunit beta.